The following is a 141-amino-acid chain: Putative pre-16S rRNA nuclease (141 aa).

This sequence belongs to the YqgF nuclease family.

The protein localises to the cytoplasm. Could be a nuclease involved in processing of the 5'-end of pre-16S rRNA. This Histophilus somni (strain 129Pt) (Haemophilus somnus) protein is Putative pre-16S rRNA nuclease.